The following is a 562-amino-acid chain: Putative transport protein YPA_0617 (562 aa).

The next 6 membrane-spanning stretches (helical) occupy residues 8 to 28, 37 to 57, 66 to 86, 94 to 114, 118 to 138, and 158 to 178; these read LLNG…LCLG, LGNA…HFAI, FMLF…SIFF, MLAL…GKLF, IGLT…LVGA, and NLSL…ILGA. 2 consecutive RCK C-terminal domains span residues 202 to 288 and 290 to 373; these read LDTD…SFRN and KEVF…KIGF. 5 helical membrane passes run 383–403, 406–426, 447–467, 475–495, and 541–561; these read LLAF…TFQF, FSFG…LGFL, FGLM…INSS, MLIS…VFGA, and IANV…PGIL.

It belongs to the AAE transporter (TC 2.A.81) family. YbjL subfamily.

It localises to the cell membrane. The chain is Putative transport protein YPA_0617 from Yersinia pestis bv. Antiqua (strain Antiqua).